The chain runs to 406 residues: 1-deoxy-D-xylulose 5-phosphate reductoisomerase (406 aa).

Residues threonine 21, glycine 22, serine 23, isoleucine 24, glycine 47, glutamine 50, and asparagine 127 each coordinate NADPH. Lysine 128 contacts 1-deoxy-D-xylulose 5-phosphate. Glutamate 129 is an NADPH binding site. Residue aspartate 151 coordinates Mn(2+). 1-deoxy-D-xylulose 5-phosphate-binding residues include serine 152, glutamate 153, serine 177, and histidine 200. A Mn(2+)-binding site is contributed by glutamate 153. Glycine 206 contacts NADPH. 1-deoxy-D-xylulose 5-phosphate is bound by residues serine 213, asparagine 218, lysine 219, and glutamate 222. Glutamate 222 contacts Mn(2+).

Belongs to the DXR family. Requires Mg(2+) as cofactor. The cofactor is Mn(2+).

It catalyses the reaction 2-C-methyl-D-erythritol 4-phosphate + NADP(+) = 1-deoxy-D-xylulose 5-phosphate + NADPH + H(+). It functions in the pathway isoprenoid biosynthesis; isopentenyl diphosphate biosynthesis via DXP pathway; isopentenyl diphosphate from 1-deoxy-D-xylulose 5-phosphate: step 1/6. In terms of biological role, catalyzes the NADPH-dependent rearrangement and reduction of 1-deoxy-D-xylulose-5-phosphate (DXP) to 2-C-methyl-D-erythritol 4-phosphate (MEP). The sequence is that of 1-deoxy-D-xylulose 5-phosphate reductoisomerase from Mycobacterium leprae (strain Br4923).